A 393-amino-acid chain; its full sequence is Protein phosphatase 2C homolog 4 (393 aa).

The region spanning 33 to 368 (YNCVGSMQGY…DNMTAIIVVL (336 aa)) is the PPM-type phosphatase domain. Residues Asp-83, Gly-84, Asp-310, and Asp-359 each contribute to the Mn(2+) site.

It belongs to the PP2C family. Requires Mg(2+) as cofactor. The cofactor is Mn(2+).

It carries out the reaction O-phospho-L-seryl-[protein] + H2O = L-seryl-[protein] + phosphate. It catalyses the reaction O-phospho-L-threonyl-[protein] + H2O = L-threonyl-[protein] + phosphate. The protein is Protein phosphatase 2C homolog 4 (PTC4) of Saccharomyces cerevisiae (strain ATCC 204508 / S288c) (Baker's yeast).